The primary structure comprises 786 residues: Keratin, type I cytoskeletal 9 (786 aa).

The tract at residues 1–21 (MNCRQFLSSHCSRDSSGGGGG) is disordered. The head stretch occupies residues 1 to 136 (MNCRQFLSSH…SGAGGILGAD (136 aa)). Serine 52 is modified (phosphoserine). Residues 137 to 172 (EKTTMQDLNSRLASYLDKVQALEDANKELESKIREW) are coil 1A. One can recognise an IF rod domain in the interval 137 to 449 (EKTTMQDLNS…SLLEGGQEDF (313 aa)). The tract at residues 173-191 (YDKQGSRTFHRDYSPYYDT) is linker 1. The coil 1B stretch occupies residues 192–283 (IEDLKNQIVN…KNHEDEMSQL (92 aa)). Residues 284–306 (TGQNSGDVNVEMNAAPGRDLTKI) are linker 12. Residues 307–445 (LNDMREEYER…KTYRSLLEGG (139 aa)) are coil 2. The tract at residues 446–760 (QEDFESHESG…GGGSGSKGGS (315 aa)) is tail. Residues 447–786 (EDFESHESGQ…DDTQGYHIQY (340 aa)) form a disordered region. 2 stretches are compositionally biased toward gly residues: residues 460–657 (GSGG…GGSG) and 664–761 (SSSG…GGSG). The segment covering 762–773 (RSSQVQSSSSKS) has biased composition (low complexity).

This sequence belongs to the intermediate filament family. As to quaternary structure, heterotetramer of two type I and two type II keratins.

Its function is as follows. May serve an important special function either in the mature palmar and plantar skin tissue or in the morphogenetic program of the formation of these tissues. Plays a role in keratin filament assembly. This chain is Keratin, type I cytoskeletal 9, found in Canis lupus familiaris (Dog).